The primary structure comprises 98 residues: NADH-ubiquinone oxidoreductase chain 4L (98 aa).

The next 3 membrane-spanning stretches (helical) occupy residues 1–21 (MLSINLNLIVAFLLALMGVLI), 29–49 (TLLCLEGMMLSLFILMTLLIT), and 59–79 (TPLILLVFSACEAAIGLALLV).

It belongs to the complex I subunit 4L family. As to quaternary structure, core subunit of respiratory chain NADH dehydrogenase (Complex I) which is composed of 45 different subunits.

Its subcellular location is the mitochondrion inner membrane. The catalysed reaction is a ubiquinone + NADH + 5 H(+)(in) = a ubiquinol + NAD(+) + 4 H(+)(out). In terms of biological role, core subunit of the mitochondrial membrane respiratory chain NADH dehydrogenase (Complex I) which catalyzes electron transfer from NADH through the respiratory chain, using ubiquinone as an electron acceptor. Part of the enzyme membrane arm which is embedded in the lipid bilayer and involved in proton translocation. The chain is NADH-ubiquinone oxidoreductase chain 4L (MT-ND4L) from Sminthopsis crassicaudata (Fat-tailed dunnart).